The primary structure comprises 181 residues: Translation initiation factor IF-3 (181 aa).

It belongs to the IF-3 family. As to quaternary structure, monomer.

Its subcellular location is the cytoplasm. In terms of biological role, IF-3 binds to the 30S ribosomal subunit and shifts the equilibrium between 70S ribosomes and their 50S and 30S subunits in favor of the free subunits, thus enhancing the availability of 30S subunits on which protein synthesis initiation begins. The chain is Translation initiation factor IF-3 from Idiomarina loihiensis (strain ATCC BAA-735 / DSM 15497 / L2-TR).